Here is a 105-residue protein sequence, read N- to C-terminus: uncharacterized protein (105 aa).

This is an uncharacterized protein from Acidianus bottle-shaped virus (isolate Italy/Pozzuoli) (ABV).